The following is a 461-amino-acid chain: Bifunctional protein GlmU (461 aa).

Residues 1–235 (MTDTRKQRAA…EDDLIGCDSK (235 aa)) are pyrophosphorylase. UDP-N-acetyl-alpha-D-glucosamine-binding positions include 13–16 (LAAG), lysine 27, glutamine 80, 85–86 (GT), 108–110 (YGD), glycine 146, glutamate 161, and asparagine 176. Aspartate 110 serves as a coordination point for Mg(2+). Residues 236–256 (ADLAEAEAIFQQKRRRALMEA) are linker. The N-acetyltransferase stretch occupies residues 257–461 (GVTMVAPETV…ARTTDQNKKG (205 aa)). Residues arginine 322 and lysine 340 each coordinate UDP-N-acetyl-alpha-D-glucosamine. Histidine 352 serves as the catalytic Proton acceptor. Residues tyrosine 355 and asparagine 366 each coordinate UDP-N-acetyl-alpha-D-glucosamine. Acetyl-CoA is bound by residues alanine 369, 375 to 376 (NY), serine 394, serine 412, and arginine 429.

It in the N-terminal section; belongs to the N-acetylglucosamine-1-phosphate uridyltransferase family. In the C-terminal section; belongs to the transferase hexapeptide repeat family. As to quaternary structure, homotrimer. It depends on Mg(2+) as a cofactor.

It is found in the cytoplasm. It carries out the reaction alpha-D-glucosamine 1-phosphate + acetyl-CoA = N-acetyl-alpha-D-glucosamine 1-phosphate + CoA + H(+). The enzyme catalyses N-acetyl-alpha-D-glucosamine 1-phosphate + UTP + H(+) = UDP-N-acetyl-alpha-D-glucosamine + diphosphate. Its pathway is nucleotide-sugar biosynthesis; UDP-N-acetyl-alpha-D-glucosamine biosynthesis; N-acetyl-alpha-D-glucosamine 1-phosphate from alpha-D-glucosamine 6-phosphate (route II): step 2/2. The protein operates within nucleotide-sugar biosynthesis; UDP-N-acetyl-alpha-D-glucosamine biosynthesis; UDP-N-acetyl-alpha-D-glucosamine from N-acetyl-alpha-D-glucosamine 1-phosphate: step 1/1. It functions in the pathway bacterial outer membrane biogenesis; LPS lipid A biosynthesis. Catalyzes the last two sequential reactions in the de novo biosynthetic pathway for UDP-N-acetylglucosamine (UDP-GlcNAc). The C-terminal domain catalyzes the transfer of acetyl group from acetyl coenzyme A to glucosamine-1-phosphate (GlcN-1-P) to produce N-acetylglucosamine-1-phosphate (GlcNAc-1-P), which is converted into UDP-GlcNAc by the transfer of uridine 5-monophosphate (from uridine 5-triphosphate), a reaction catalyzed by the N-terminal domain. The protein is Bifunctional protein GlmU of Hyphomonas neptunium (strain ATCC 15444).